Reading from the N-terminus, the 741-residue chain is Translation initiation factor IF-2 (741 aa).

Composition is skewed to basic and acidic residues over residues 48–74 (HQYR…DKPK) and 107–123 (KGKE…EKKA). The interval 48-158 (HQYRPKAEKK…PQPAKKEKEL (111 aa)) is disordered. The segment covering 127 to 139 (AKKKGKGPAKGKK) has biased composition (basic residues). A compositionally biased stretch (low complexity) spans 140 to 151 (QAAPAAKQVPQP). A tr-type G domain is found at 242 to 411 (ERPPVVTIMG…LLVSEMEELK (170 aa)). The segment at 251 to 258 (GHVDHGKT) is G1. Position 251–258 (251–258 (GHVDHGKT)) interacts with GTP. Residues 276–280 (GITQH) form a G2 region. The tract at residues 297-300 (DTPG) is G3. Residues 297 to 301 (DTPGH) and 351 to 354 (NKMD) each bind GTP. The tract at residues 351 to 354 (NKMD) is G4. Residues 387-389 (SAK) form a G5 region.

The protein belongs to the TRAFAC class translation factor GTPase superfamily. Classic translation factor GTPase family. IF-2 subfamily.

Its subcellular location is the cytoplasm. Its function is as follows. One of the essential components for the initiation of protein synthesis. Protects formylmethionyl-tRNA from spontaneous hydrolysis and promotes its binding to the 30S ribosomal subunits. Also involved in the hydrolysis of GTP during the formation of the 70S ribosomal complex. The sequence is that of Translation initiation factor IF-2 (infB) from Geobacillus stearothermophilus (Bacillus stearothermophilus).